A 148-amino-acid polypeptide reads, in one-letter code: Low molecular weight protein-tyrosine-phosphatase Etp (148 aa).

C13 acts as the Nucleophile in catalysis. R19 is a catalytic residue. The active-site Proton donor is the D119.

Belongs to the low molecular weight phosphotyrosine protein phosphatase family.

It carries out the reaction O-phospho-L-tyrosyl-[protein] + H2O = L-tyrosyl-[protein] + phosphate. Functionally, dephosphorylates etk. The sequence is that of Low molecular weight protein-tyrosine-phosphatase Etp (etp) from Escherichia coli O157:H7.